The following is a 186-amino-acid chain: Apolipophorin-3 (186 aa).

Residues 1-18 (MAAKYVFVVAACSALAQA) form the signal peptide. Residues 19-23 (GIVRR) constitute a propeptide that is removed on maturation.

Belongs to the insect apolipophorin-3 family. As to quaternary structure, equilibrium between a soluble monomer and a bound lipoprotein form. Apolipophorin-3 associates with lipophorin during lipid loading until each particle contains 9 or 14 molecules of apolipophorin-3. As to expression, expressed in hemolymph. Also found in hemocytes and fat body.

It localises to the secreted. In terms of biological role, assists in the loading of diacylglycerol, generated from triacylglycerol stores in the fat body through the action of adipokinetic hormone, into lipophorin, the hemolymph lipoprotein. It increases the lipid carrying capacity of lipophorin by covering the expanding hydrophobic surface resulting from diacylglycerol uptake. It thus plays a critical role in the transport of lipids during flight in several species of insects. Has antibacterial activity against the Gram-positive bacteria L.monocytogenes (MIC=6.5 uM). Lacks antibacterial activity against the Gram-positive bacteria B.circulans, M.luteus, S.aureus, and S.lutea, and the Gram-negative bacteria E.coli D31, E.coli ATCC 25922, and S.typhimurium. Lacks antifungal activity against S.cerevisiae, P.pastoris, Z.marxianus, C.albicans, C.wickerhamii, A.niger, F.oxysporum, and T.harizianum. The polypeptide is Apolipophorin-3 (Galleria mellonella (Greater wax moth)).